We begin with the raw amino-acid sequence, 603 residues long: Zyxin (603 aa).

Residues 1–13 (MGPPPPPPPPPLL) show a composition bias toward pro residues. Disordered stretches follow at residues 1–131 (MGPP…HRDP), 166–193 (TQYANKSPSPPSFGNSNSEATYVSPYSS), 218–237 (ATTTTSSNSLNENNNSNKYG), 310–333 (RDEGLTESQKAANRNQTGALSASS), and 363–395 (LNQPADTSPSIVQYPRRQAPDSSRANYSATTST). The segment covering 69 to 95 (VRGDVENLSDGRLDRPHQQLPDGDRTY) has biased composition (basic and acidic residues). Residues 184–193 (EATYVSPYSS) show a composition bias toward polar residues. The span at 218-234 (ATTTTSSNSLNENNNSN) shows a compositional bias: low complexity. Polar residues-rich tracts occupy residues 315–333 (TESQKAANRNQTGALSASS), 363–373 (LNQPADTSPSI), and 382–391 (PDSSRANYSA). 3 LIM zinc-binding domains span residues 409 to 470 (NICV…SLEK), 471 to 529 (CTAC…KFAP), and 530 to 601 (RCAL…RVVS).

It belongs to the zyxin/ajuba family. As to quaternary structure, interacts with dyc-1. Interacts with glh-1 and glh-3. As to expression, expressed in neurons and body wall muscle. Expressed in pharyngeal, enteric and uterine muscles and in spermatheca.

The protein resides in the nucleus. Its subcellular location is the cytoplasm. It is found in the myofibril. It localises to the sarcomere. The protein localises to the m line. The protein resides in the cell projection. Its subcellular location is the axon. It is found in the cell junction. It localises to the focal adhesion. The protein localises to the cytoskeleton. Functions both as a mechanical stabilizer (via LIM domains) of focal adhesions, and as a sensor component for muscle cell damage (via N-terminus). Regulates, stabilizes and maintains posterior lateral mechanosensory (PLM) synaptic branch extension and new synapse formation and growth during larval development. In Caenorhabditis elegans, this protein is Zyxin.